Reading from the N-terminus, the 176-residue chain is Transcription factor 21 (176 aa).

The disordered stretch occupies residues methionine 1–arginine 84. Residues glycine 31–glutamate 44 are compositionally biased toward polar residues. In terms of domain architecture, bHLH spans valine 76–leucine 128.

Efficient DNA binding requires dimerization with another bHLH protein. In terms of tissue distribution, expressed in the cranial paraxial mesoderm from 20 hpf and subsequently becomes restricted to the pharyngeal mesoderm that will form the muscle. Expression in the proepicardial organ is first seen at 40hpf in a cluster of cells between the myocardium and yolk. Also expressed in the developing arches. Expression begins to surround the heart by day 3 of development, and by 96 hpf, expression is restricted to the outer epicardial layer surrounding the myocardium.

It localises to the nucleus. Involved in epithelial-mesenchymal interactions in kidney and lung morphogenesis that include epithelial differentiation and branching morphogenesis. This Danio rerio (Zebrafish) protein is Transcription factor 21.